The chain runs to 617 residues: V-type proton ATPase catalytic subunit A (617 aa).

Asp2 bears the N-acetylalanine mark. Phosphothreonine is present on Thr136. 250 to 257 (GAFGCGKT) provides a ligand contact to ATP. Ser384 carries the phosphoserine; by AMPK modification.

This sequence belongs to the ATPase alpha/beta chains family. As to quaternary structure, V-ATPase is a heteromultimeric enzyme made up of two complexes: the ATP-hydrolytic V1 complex and the proton translocation V0 complex. The V1 complex consists of three catalytic AB heterodimers that form a heterohexamer, three peripheral stalks each consisting of EG heterodimers, one central rotor including subunits D and F, and the regulatory subunits C and H. The proton translocation complex V0 consists of the proton transport subunit a, a ring of proteolipid subunits c9c'', rotary subunit d, subunits e and f, and the accessory subunits ATP6AP1/Ac45 and ATP6AP2/PRR. Interacts with the V0 complex V-ATPase subunit a4 ATP6V0A4. Interacts with WFS1. Interacts with alpha-crystallin B chain/CRYAB and with MTOR, forming a ternary complex. (Microbial infection) Interacts with Rabies virus protein M; this interaction promotes virion uncoating. Post-translationally, phosphorylation at Ser-384 by AMPK down-regulates its enzyme activity. As to expression, high expression in the skin.

It is found in the cytoplasm. Its subcellular location is the cytosol. The protein localises to the cytoplasmic vesicle. The protein resides in the secretory vesicle. It localises to the clathrin-coated vesicle membrane. It is found in the lysosome. The catalysed reaction is ATP + H2O + 4 H(+)(in) = ADP + phosphate + 5 H(+)(out). Its activity is regulated as follows. ATP hydrolysis occurs at the interface between the nucleotide-binding domains of subunits A and B. ATP hydrolysis triggers a conformational change in the subunits D and F, which induces a shift of subunit d. The c-ring is subsequently rotated and results in a continuous proton translocation across the membrane. In terms of biological role, catalytic subunit of the V1 complex of vacuolar(H+)-ATPase (V-ATPase), a multisubunit enzyme composed of a peripheral complex (V1) that hydrolyzes ATP and a membrane integral complex (V0) that translocates protons. V-ATPase is responsible for acidifying and maintaining the pH of intracellular compartments and in some cell types, is targeted to the plasma membrane, where it is responsible for acidifying the extracellular environment. In aerobic conditions, involved in intracellular iron homeostasis, thus triggering the activity of Fe(2+) prolyl hydroxylase (PHD) enzymes, and leading to HIF1A hydroxylation and subsequent proteasomal degradation. May play a role in neurite development and synaptic connectivity. Its function is as follows. (Microbial infection) Plays an important role in virion uncoating during Rabies virus replication after membrane fusion. Specifically, participates in the dissociation of incoming viral matrix M proteins uncoating through direct interaction. The polypeptide is V-type proton ATPase catalytic subunit A (ATP6V1A) (Homo sapiens (Human)).